Consider the following 525-residue polypeptide: GMP synthase [glutamine-hydrolyzing] (525 aa).

A Glutamine amidotransferase type-1 domain is found at 8–207 (KILILDFGSQ…ALDICQCDAN (200 aa)). Cysteine 85 acts as the Nucleophile in catalysis. Residues histidine 181 and glutamate 183 contribute to the active site. The region spanning 208-400 (WKPASIIEDA…LGLPYDMLYR (193 aa)) is the GMPS ATP-PPase domain. 235 to 241 (SGGVDSS) lines the ATP pocket.

Homodimer.

It carries out the reaction XMP + L-glutamine + ATP + H2O = GMP + L-glutamate + AMP + diphosphate + 2 H(+). The protein operates within purine metabolism; GMP biosynthesis; GMP from XMP (L-Gln route): step 1/1. Functionally, catalyzes the synthesis of GMP from XMP. This chain is GMP synthase [glutamine-hydrolyzing], found in Shewanella woodyi (strain ATCC 51908 / MS32).